The chain runs to 134 residues: Profilin-1 (134 aa).

Belongs to the profilin family. In terms of assembly, occurs in many kinds of cells as a complex with monomeric actin in a 1:1 ratio.

The protein resides in the cytoplasm. It localises to the cytoskeleton. Functionally, binds to actin and affects the structure of the cytoskeleton. At high concentrations, profilin prevents the polymerization of actin, whereas it enhances it at low concentrations. By binding to PIP2, it inhibits the formation of IP3 and DG. This chain is Profilin-1 (PRO1), found in Nicotiana tabacum (Common tobacco).